A 565-amino-acid polypeptide reads, in one-letter code: uncharacterized protein (565 aa).

This is an uncharacterized protein from Acanthamoeba polyphaga mimivirus (APMV).